The following is a 668-amino-acid chain: Lebercilin-like protein (668 aa).

The tract at residues 17–44 (SVALENNRRSAECKRSPGTGDFSRNSSA) is disordered. Positions 22–31 (NNRRSAECKR) are enriched in basic and acidic residues. Coiled coils occupy residues 148–259 (LHKI…EREE) and 305–336 (AAQT…IKNI). The interval 351–402 (YPKVSSTKSVQADRKSLPFTSMRHQGTQKSDVPPLTTKGKKATGNMNHKEKS) is disordered. Positions 368–380 (PFTSMRHQGTQKS) are enriched in polar residues. A coiled-coil region spans residues 420–440 (EDSKTKYEDLSREEKHLEVQV). Disordered regions lie at residues 495 to 520 (RSMQ…PLRQ), 533 to 581 (LHHG…FGKS), and 605 to 668 (SGYV…KIII). A compositionally biased stretch (polar residues) spans 546 to 558 (AGNTKYSHSTSKH). Basic and acidic residues-rich tracts occupy residues 560–572 (SNRE…HSDS) and 621–632 (GSEEPLQSKESH). Positions 633–660 (PPSQASASNAFGDSKVTVVNSIKPSSPT) are enriched in polar residues.

Belongs to the LCA5 family.

The polypeptide is Lebercilin-like protein (Macaca fascicularis (Crab-eating macaque)).